A 141-amino-acid chain; its full sequence is Hemoglobin subunit alpha (141 aa).

Positions 1 to 141 (VLSSKDKANI…VSTVLTSKYR (141 aa)) constitute a Globin domain. Ser3 carries the post-translational modification Phosphoserine. N6-succinyllysine occurs at positions 7 and 11. Position 16 is an N6-acetyllysine; alternate (Lys16). Lys16 carries the post-translational modification N6-succinyllysine; alternate. Tyr24 carries the phosphotyrosine modification. N6-succinyllysine is present on Lys40. At Ser49 the chain carries Phosphoserine. An O2-binding site is contributed by His58. His87 is a heme b binding site. Residue Ser102 is modified to Phosphoserine. Position 108 is a phosphothreonine (Thr108). Residue Ser124 is modified to Phosphoserine. Thr134 and Thr137 each carry phosphothreonine. Residue Ser138 is modified to Phosphoserine.

This sequence belongs to the globin family. In terms of assembly, heterotetramer of two alpha chains and two beta chains. In terms of tissue distribution, red blood cells.

Its function is as follows. Involved in oxygen transport from the lung to the various peripheral tissues. Hemopressin acts as an antagonist peptide of the cannabinoid receptor CNR1. Hemopressin-binding efficiently blocks cannabinoid receptor CNR1 and subsequent signaling. In Lama glama (Llama), this protein is Hemoglobin subunit alpha (HBA).